A 360-amino-acid polypeptide reads, in one-letter code: MGNIMTCCVCPRASPELDQHQGSVCPCGSEIYKAAAGDMIAGVPVAAAVEPGEVTFEAGEGLHVHHICEREMPEDIPLESNSSDHPKASTIFLRKSQTDVQEKRKSNYTKHVSTERFTQQYSSCSTIFLDDSTASQPHLTMTLKSVTLAIYYHIKQRDADRSLGIFDERLHPLTREEVLEEYFKYDPEHKFIFRFVRTLFKAIRLTAEFAIVSLIYIERLVSYADIDICPTNWKRIVLGAILLASKVWSDMAVWNEDYCKLFENITVEEMNELERQFLKLINYNIGVTGSVYSRFYFDLRSLAHDNGLYSPVYLLDRERAWKLEAFSRMEQYKVFYSAAKNGSLSAEDLIHLQRAKAILF.

The 83-residue stretch at 204-286 (RLTAEFAIVS…FLKLINYNIG (83 aa)) folds into the Cyclin N-terminal domain.

This sequence belongs to the cyclin family. Cyclin Y subfamily.

The sequence is that of Cyclin-Y-like protein 2 (CCNYL2) from Macaca fascicularis (Crab-eating macaque).